The sequence spans 210 residues: Large ribosomal subunit protein uL5 (210 aa).

The interval 188-210 (AKDDPKKAKTKRGPAYYAKKKKK) is disordered. The segment covering 195 to 210 (AKTKRGPAYYAKKKKK) has biased composition (basic residues).

This sequence belongs to the universal ribosomal protein uL5 family. In terms of assembly, part of the 50S ribosomal subunit; part of the 5S rRNA/L5/L18/L25 subcomplex. Contacts the 5S rRNA and the P site tRNA. Forms a bridge to the 30S subunit in the 70S ribosome.

This is one of the proteins that bind and probably mediate the attachment of the 5S RNA into the large ribosomal subunit, where it forms part of the central protuberance. In the 70S ribosome it contacts protein S13 of the 30S subunit (bridge B1b), connecting the 2 subunits; this bridge is implicated in subunit movement. Contacts the P site tRNA; the 5S rRNA and some of its associated proteins might help stabilize positioning of ribosome-bound tRNAs. In Cutibacterium acnes (strain DSM 16379 / KPA171202) (Propionibacterium acnes), this protein is Large ribosomal subunit protein uL5.